A 365-amino-acid polypeptide reads, in one-letter code: 3-dehydroquinate synthase (365 aa).

Residues 69–74 (DGEAHK), 103–107 (GVIGD), 127–128 (TT), lysine 140, lysine 149, and 167–170 (TLNT) each bind NAD(+). Glutamate 182, histidine 245, and histidine 262 together coordinate Zn(2+).

This sequence belongs to the sugar phosphate cyclases superfamily. Dehydroquinate synthase family. Co(2+) is required as a cofactor. Zn(2+) serves as cofactor. Requires NAD(+) as cofactor.

The protein resides in the cytoplasm. It carries out the reaction 7-phospho-2-dehydro-3-deoxy-D-arabino-heptonate = 3-dehydroquinate + phosphate. It participates in metabolic intermediate biosynthesis; chorismate biosynthesis; chorismate from D-erythrose 4-phosphate and phosphoenolpyruvate: step 2/7. Its function is as follows. Catalyzes the conversion of 3-deoxy-D-arabino-heptulosonate 7-phosphate (DAHP) to dehydroquinate (DHQ). The protein is 3-dehydroquinate synthase of Pseudomonas putida (strain W619).